Reading from the N-terminus, the 81-residue chain is Putative sulfur carrier protein VNG_5061C/VNG_5236C/VNG_6059C/VNG_6467C (81 aa).

Cys18 (cysteine persulfide intermediate) is an active-site residue.

The protein belongs to the sulfur carrier protein TusA family.

This chain is Putative sulfur carrier protein VNG_5061C/VNG_5236C/VNG_6059C/VNG_6467C, found in Halobacterium salinarum (strain ATCC 700922 / JCM 11081 / NRC-1) (Halobacterium halobium).